The sequence spans 350 residues: UDP-3-O-acylglucosamine N-acyltransferase (350 aa).

His-244 functions as the Proton acceptor in the catalytic mechanism.

It belongs to the transferase hexapeptide repeat family. LpxD subfamily. As to quaternary structure, homotrimer.

The catalysed reaction is a UDP-3-O-[(3R)-3-hydroxyacyl]-alpha-D-glucosamine + a (3R)-hydroxyacyl-[ACP] = a UDP-2-N,3-O-bis[(3R)-3-hydroxyacyl]-alpha-D-glucosamine + holo-[ACP] + H(+). It participates in bacterial outer membrane biogenesis; LPS lipid A biosynthesis. In terms of biological role, catalyzes the N-acylation of UDP-3-O-acylglucosamine using 3-hydroxyacyl-ACP as the acyl donor. Is involved in the biosynthesis of lipid A, a phosphorylated glycolipid that anchors the lipopolysaccharide to the outer membrane of the cell. In Janthinobacterium sp. (strain Marseille) (Minibacterium massiliensis), this protein is UDP-3-O-acylglucosamine N-acyltransferase.